We begin with the raw amino-acid sequence, 324 residues long: Cathepsin L-like proteinase (324 aa).

The first 16 residues, 1 to 16 (MKLIIALAALIVVINA), serve as a signal peptide directing secretion. 3 disulfide bridges follow: cysteine 131/cysteine 174, cysteine 165/cysteine 206, and cysteine 263/cysteine 312. Cysteine 134 is an active-site residue. Residues histidine 270 and asparagine 290 contribute to the active site.

This sequence belongs to the peptidase C1 family. Expressed in larval carcasses and gut, and adult gut.

This chain is Cathepsin L-like proteinase, found in Phaedon cochleariae (Mustard beetle).